Consider the following 194-residue polypeptide: ATP-dependent Clp protease proteolytic subunit (194 aa).

S98 serves as the catalytic Nucleophile. The active site involves H123.

This sequence belongs to the peptidase S14 family. As to quaternary structure, fourteen ClpP subunits assemble into 2 heptameric rings which stack back to back to give a disk-like structure with a central cavity, resembling the structure of eukaryotic proteasomes.

It is found in the cytoplasm. It catalyses the reaction Hydrolysis of proteins to small peptides in the presence of ATP and magnesium. alpha-casein is the usual test substrate. In the absence of ATP, only oligopeptides shorter than five residues are hydrolyzed (such as succinyl-Leu-Tyr-|-NHMec, and Leu-Tyr-Leu-|-Tyr-Trp, in which cleavage of the -Tyr-|-Leu- and -Tyr-|-Trp bonds also occurs).. In terms of biological role, cleaves peptides in various proteins in a process that requires ATP hydrolysis. Has a chymotrypsin-like activity. Plays a major role in the degradation of misfolded proteins. This is ATP-dependent Clp protease proteolytic subunit from Ruminiclostridium cellulolyticum (strain ATCC 35319 / DSM 5812 / JCM 6584 / H10) (Clostridium cellulolyticum).